Consider the following 556-residue polypeptide: Glutamine--tRNA ligase (556 aa).

Residues 34 to 44 (PEPNGYLHIGH) carry the 'HIGH' region motif. Residues 35 to 37 (EPN) and 41 to 47 (HIGHAKS) each bind ATP. L-glutamine contacts are provided by aspartate 67 and tyrosine 212. Residues threonine 231, 261–262 (RL), and 269–271 (MSK) contribute to the ATP site. The 'KMSKS' region signature appears at 268 to 272 (VMSKR).

It belongs to the class-I aminoacyl-tRNA synthetase family. Monomer.

The protein resides in the cytoplasm. It carries out the reaction tRNA(Gln) + L-glutamine + ATP = L-glutaminyl-tRNA(Gln) + AMP + diphosphate. This chain is Glutamine--tRNA ligase, found in Vibrio parahaemolyticus serotype O3:K6 (strain RIMD 2210633).